The sequence spans 839 residues: AMP deaminase (839 aa).

A helical transmembrane segment spans residues 8-28 (LALAALFGASFVAVSGFFMHF). Positions 40–167 (ERKENPDGDE…DDDDNLTNSE (128 aa)) are disordered. Residues 85 to 94 (DGGGGGGGDT) show a composition bias toward gly residues. Residues serine 134 and serine 140 each carry the phosphoserine modification. The segment covering 153 to 162 (SVEESDDDDN) has biased composition (acidic residues). Serine 203 is subject to Phosphoserine. 289-296 (AHYPQGKS) lines the ATP pocket. Histidine 391 and histidine 393 together coordinate Zn(2+). Substrate contacts are provided by residues histidine 393 and 462–467 (KFNLKY). Position 659 (histidine 659) interacts with Zn(2+). Residue glutamate 662 coordinates substrate. The Proton acceptor role is filled by histidine 681. Aspartate 736 serves as a coordination point for Zn(2+). 737–740 (DPLQ) serves as a coordination point for substrate.

This sequence belongs to the metallo-dependent hydrolases superfamily. Adenosine and AMP deaminases family. In terms of assembly, homodimer. Interacts with AHK4. Interacts with EER5. Zn(2+) serves as cofactor. As to expression, expressed in seedlings, roots, leaves, flowers, pollen grains, pollen tubes and siliques, and at a lower level in stems.

The protein resides in the membrane. It localises to the microsome membrane. It catalyses the reaction AMP + H2O + H(+) = IMP + NH4(+). It functions in the pathway purine metabolism; IMP biosynthesis via salvage pathway; IMP from AMP: step 1/1. Its activity is regulated as follows. Activated by ATP. Activated by sulfate ions (in vitro). Inhibited by phosphate ions. Its function is as follows. AMP deaminase plays a critical role in energy metabolism. Essential for the transition from zygote to embryo. This is AMP deaminase from Arabidopsis thaliana (Mouse-ear cress).